Reading from the N-terminus, the 144-residue chain is Protein BUD31 homolog (144 aa).

Residues 2–10 (PKVRRSRKP) carry the Nuclear localization signal motif.

Belongs to the BUD31 (G10) family.

The protein resides in the nucleus. The polypeptide is Protein BUD31 homolog (Branchiostoma belcheri (Amphioxus)).